A 173-amino-acid polypeptide reads, in one-letter code: Crossover junction endodeoxyribonuclease RuvC (173 aa).

Active-site residues include Asp8, Glu67, and Asp139. Mg(2+)-binding residues include Asp8, Glu67, and Asp139.

This sequence belongs to the RuvC family. In terms of assembly, homodimer which binds Holliday junction (HJ) DNA. The HJ becomes 2-fold symmetrical on binding to RuvC with unstacked arms; it has a different conformation from HJ DNA in complex with RuvA. In the full resolvosome a probable DNA-RuvA(4)-RuvB(12)-RuvC(2) complex forms which resolves the HJ. Mg(2+) serves as cofactor.

It is found in the cytoplasm. The catalysed reaction is Endonucleolytic cleavage at a junction such as a reciprocal single-stranded crossover between two homologous DNA duplexes (Holliday junction).. In terms of biological role, the RuvA-RuvB-RuvC complex processes Holliday junction (HJ) DNA during genetic recombination and DNA repair. Endonuclease that resolves HJ intermediates. Cleaves cruciform DNA by making single-stranded nicks across the HJ at symmetrical positions within the homologous arms, yielding a 5'-phosphate and a 3'-hydroxyl group; requires a central core of homology in the junction. The consensus cleavage sequence is 5'-(A/T)TT(C/G)-3'. Cleavage occurs on the 3'-side of the TT dinucleotide at the point of strand exchange. HJ branch migration catalyzed by RuvA-RuvB allows RuvC to scan DNA until it finds its consensus sequence, where it cleaves and resolves the cruciform DNA. The protein is Crossover junction endodeoxyribonuclease RuvC of Sodalis glossinidius (strain morsitans).